Here is a 379-residue protein sequence, read N- to C-terminus: Queuine tRNA-ribosyltransferase (379 aa).

The active-site Proton acceptor is Asp-94. Residues 94 to 98 (DSGGF), Asp-148, Gln-191, and Gly-218 each bind substrate. Residues 249–255 (GVGSPDS) are RNA binding. Residue Asp-268 is the Nucleophile of the active site. The tract at residues 273–277 (TRIAR) is RNA binding; important for wobble base 34 recognition. Zn(2+)-binding residues include Cys-306, Cys-308, Cys-311, and His-337.

The protein belongs to the queuine tRNA-ribosyltransferase family. As to quaternary structure, homodimer. Within each dimer, one monomer is responsible for RNA recognition and catalysis, while the other monomer binds to the replacement base PreQ1. It depends on Zn(2+) as a cofactor.

The catalysed reaction is 7-aminomethyl-7-carbaguanine + guanosine(34) in tRNA = 7-aminomethyl-7-carbaguanosine(34) in tRNA + guanine. The protein operates within tRNA modification; tRNA-queuosine biosynthesis. In terms of biological role, catalyzes the base-exchange of a guanine (G) residue with the queuine precursor 7-aminomethyl-7-deazaguanine (PreQ1) at position 34 (anticodon wobble position) in tRNAs with GU(N) anticodons (tRNA-Asp, -Asn, -His and -Tyr). Catalysis occurs through a double-displacement mechanism. The nucleophile active site attacks the C1' of nucleotide 34 to detach the guanine base from the RNA, forming a covalent enzyme-RNA intermediate. The proton acceptor active site deprotonates the incoming PreQ1, allowing a nucleophilic attack on the C1' of the ribose to form the product. After dissociation, two additional enzymatic reactions on the tRNA convert PreQ1 to queuine (Q), resulting in the hypermodified nucleoside queuosine (7-(((4,5-cis-dihydroxy-2-cyclopenten-1-yl)amino)methyl)-7-deazaguanosine). The chain is Queuine tRNA-ribosyltransferase from Listeria monocytogenes serovar 1/2a (strain ATCC BAA-679 / EGD-e).